The chain runs to 474 residues: Dihydrolipoyl dehydrogenase (474 aa).

FAD contacts are provided by residues glutamate 34 to cysteine 42, lysine 51, and glycine 114. An intrachain disulfide couples cysteine 42 to cysteine 47. Residues glycine 188–isoleucine 192, glutamate 211, valine 245, and serine 278–arginine 281 each bind NAD(+). FAD-binding residues include aspartate 320 and alanine 328. Catalysis depends on histidine 453, which acts as the Proton acceptor.

The protein belongs to the class-I pyridine nucleotide-disulfide oxidoreductase family. Homodimer. It depends on FAD as a cofactor.

It localises to the cytoplasm. It catalyses the reaction N(6)-[(R)-dihydrolipoyl]-L-lysyl-[protein] + NAD(+) = N(6)-[(R)-lipoyl]-L-lysyl-[protein] + NADH + H(+). The branched-chain alpha-keto dehydrogenase complex catalyzes the overall conversion of alpha-keto acids to acyl-CoA and CO(2). It contains multiple copies of 3 enzymatic components: branched-chain alpha-keto acid decarboxylase (E1), lipoamide acyltransferase (E2) and lipoamide dehydrogenase (E3). This is Dihydrolipoyl dehydrogenase (bfmBC) from Bacillus subtilis (strain 168).